A 957-amino-acid chain; its full sequence is Glycine dehydrogenase (decarboxylating) 2 (957 aa).

Lysine 707 is modified (N6-(pyridoxal phosphate)lysine).

The protein belongs to the GcvP family. As to quaternary structure, the glycine cleavage system is composed of four proteins: P, T, L and H. Requires pyridoxal 5'-phosphate as cofactor.

It catalyses the reaction N(6)-[(R)-lipoyl]-L-lysyl-[glycine-cleavage complex H protein] + glycine + H(+) = N(6)-[(R)-S(8)-aminomethyldihydrolipoyl]-L-lysyl-[glycine-cleavage complex H protein] + CO2. Functionally, the glycine cleavage system catalyzes the degradation of glycine. The P protein binds the alpha-amino group of glycine through its pyridoxal phosphate cofactor; CO(2) is released and the remaining methylamine moiety is then transferred to the lipoamide cofactor of the H protein. This chain is Glycine dehydrogenase (decarboxylating) 2 (gcvP2), found in Pseudomonas putida (strain ATCC 47054 / DSM 6125 / CFBP 8728 / NCIMB 11950 / KT2440).